The primary structure comprises 199 residues: ATP synthase subunit b (199 aa).

Residues 5–25 (SFVTTLSVCVMILGLAALGFA) traverse the membrane as a helical segment.

This sequence belongs to the ATPase B chain family. In terms of assembly, F-type ATPases have 2 components, F(1) - the catalytic core - and F(0) - the membrane proton channel. F(1) has five subunits: alpha(3), beta(3), gamma(1), delta(1), epsilon(1). F(0) has three main subunits: a(1), b(2) and c(10-14). The alpha and beta chains form an alternating ring which encloses part of the gamma chain. F(1) is attached to F(0) by a central stalk formed by the gamma and epsilon chains, while a peripheral stalk is formed by the delta and b chains.

Its subcellular location is the cell inner membrane. Functionally, f(1)F(0) ATP synthase produces ATP from ADP in the presence of a proton or sodium gradient. F-type ATPases consist of two structural domains, F(1) containing the extramembraneous catalytic core and F(0) containing the membrane proton channel, linked together by a central stalk and a peripheral stalk. During catalysis, ATP synthesis in the catalytic domain of F(1) is coupled via a rotary mechanism of the central stalk subunits to proton translocation. Its function is as follows. Component of the F(0) channel, it forms part of the peripheral stalk, linking F(1) to F(0). This is ATP synthase subunit b from Citrifermentans bemidjiense (strain ATCC BAA-1014 / DSM 16622 / JCM 12645 / Bem) (Geobacter bemidjiensis).